A 338-amino-acid chain; its full sequence is Holliday junction branch migration complex subunit RuvB (338 aa).

Residues methionine 1 to tyrosine 181 form a large ATPase domain (RuvB-L) region. ATP is bound by residues leucine 20, arginine 21, glycine 62, lysine 65, threonine 66, threonine 67, glutamate 128–phenylalanine 130, arginine 171, tyrosine 181, and arginine 218. Threonine 66 contacts Mg(2+). The tract at residues serine 182–glycine 252 is small ATPAse domain (RuvB-S). Residues glutamate 255–valine 338 form a head domain (RuvB-H) region. DNA contacts are provided by arginine 310 and arginine 315.

It belongs to the RuvB family. In terms of assembly, homohexamer. Forms an RuvA(8)-RuvB(12)-Holliday junction (HJ) complex. HJ DNA is sandwiched between 2 RuvA tetramers; dsDNA enters through RuvA and exits via RuvB. An RuvB hexamer assembles on each DNA strand where it exits the tetramer. Each RuvB hexamer is contacted by two RuvA subunits (via domain III) on 2 adjacent RuvB subunits; this complex drives branch migration. In the full resolvosome a probable DNA-RuvA(4)-RuvB(12)-RuvC(2) complex forms which resolves the HJ.

The protein resides in the cytoplasm. It catalyses the reaction ATP + H2O = ADP + phosphate + H(+). Functionally, the RuvA-RuvB-RuvC complex processes Holliday junction (HJ) DNA during genetic recombination and DNA repair, while the RuvA-RuvB complex plays an important role in the rescue of blocked DNA replication forks via replication fork reversal (RFR). RuvA specifically binds to HJ cruciform DNA, conferring on it an open structure. The RuvB hexamer acts as an ATP-dependent pump, pulling dsDNA into and through the RuvAB complex. RuvB forms 2 homohexamers on either side of HJ DNA bound by 1 or 2 RuvA tetramers; 4 subunits per hexamer contact DNA at a time. Coordinated motions by a converter formed by DNA-disengaged RuvB subunits stimulates ATP hydrolysis and nucleotide exchange. Immobilization of the converter enables RuvB to convert the ATP-contained energy into a lever motion, pulling 2 nucleotides of DNA out of the RuvA tetramer per ATP hydrolyzed, thus driving DNA branch migration. The RuvB motors rotate together with the DNA substrate, which together with the progressing nucleotide cycle form the mechanistic basis for DNA recombination by continuous HJ branch migration. Branch migration allows RuvC to scan DNA until it finds its consensus sequence, where it cleaves and resolves cruciform DNA. This is Holliday junction branch migration complex subunit RuvB from Thermoanaerobacter pseudethanolicus (strain ATCC 33223 / 39E) (Clostridium thermohydrosulfuricum).